The following is a 390-amino-acid chain: Immunoglobulin mu Fc receptor (390 aa).

The first 16 residues, 1–16, serve as a signal peptide directing secretion; that stretch reads MDFWLWPLYFLPVSGA. At 17-251 the chain is on the extracellular side; that stretch reads LRILPEVKVE…GSQSGREGQG (235 aa). The 101-residue stretch at 23–123 folds into the Ig-like domain; that stretch reads VKVEGELGGS…KTQKVTLNVH (101 aa). Residues 33 to 115 form a CDR4 region; sequence VTIKCPLPEM…AGMNTDRGKT (83 aa). Disulfide bonds link Cys-37–Cys-104 and Cys-49–Cys-58. A CDR1 region spans residues 40-45; it reads PEMHVR. Residues 59–70 are CDR2; it reads GTVVSTTNFIKA. Thr-92 carries the post-translational modification Phosphothreonine. The tract at residues 106 to 115 is CDR3; it reads AGMNTDRGKT. Residues 166-204 form a disordered region; sequence PAQRGKVPPVHHSSPTTQITHRPRVSRASSVAGDKPRTF. The chain crosses the membrane as a helical span at residues 252–272; sequence FHILIPTILGLFLLALLGLVV. Residues 273 to 390 lie on the Cytoplasmic side of the membrane; sequence KRAVERRKAL…DSDDYINVPA (118 aa). Composition is skewed to low complexity over residues 293–311 and 325–334; these read MRAL…PRSQ and ADAAGTGEAP. The segment at 293–348 is disordered; it reads MRALESSQRPRGSPRPRSQNNIYSACPRRARGADAAGTGEAPVPGPGAPLPPAPLQ. Residues 335–346 are compositionally biased toward pro residues; the sequence is VPGPGAPLPPAP.

As to quaternary structure, interacts (via Ig-like domain) with IGHM (via CH4/Cmu4 domain), both secreted and membrane-bound IgM; the interaction is glycan-independent and multivalent theoretically involving up to eight binding sites for the IgM pentamer. Post-translationally, phosphorylated on both Tyr and Ser residues. In terms of processing, O-glycosylated. Sialylated. O-linked glycans regulate trafficking to the plasma membrane. As to expression, expressed by CD19-positive B cells and CD4-positive and CD8-positive T cell populations in primary and secondary lymphoid tissues (at protein level). Among B cell subsets, detected in a subset of bone marrow pro- and pre-B cells, in most follicular and memory B cells and in a small subset of germinal center B cells (at protein level). Expressed at lower levels in CD56-positive NK cells (at protein level). Expressed in lymph nodes, lung, thymus and kidneys. Very weak expression detected in spleen, liver, heart, and salivary gland.

It localises to the cell membrane. The protein localises to the early endosome membrane. The protein resides in the golgi apparatus. Its subcellular location is the trans-Golgi network membrane. It is found in the lysosome membrane. It localises to the secreted. Its function is as follows. High-affinity Fc receptor for immunoglobulin M (IgM), both secreted and membrane-bound IgM. Primarily regulates IgM transport and homeostasis. In lymphoid cells, enables exocytosis of membrane-bound IgM on the plasma membrane as well as endocytosis of IgM-antigen complexes toward lysosomes for degradation. In mucosal epithelium, mediates retrotranscytosis of antigen-IgM complexes across mucosal M cells toward antigen-presenting cells in mucosal lymphoid tissues. Triggers costimulatory signaling and mediates most of IgM effector functions involved in B cell development and primary immune response to infection. Likely limits tonic IgM BCR signaling to self-antigens for proper negative selection of autoreactive B cells in the bone marrow and for the maintenance of regulatory B cell pool in peripheral lymphoid organs. Mediates antibody responses to T cell-dependent and T cell-independent antigens and promotes induction of an efficient neutralizing IgG response. Engages in cross-talk with antigen-receptor signaling via the non-canonical NF-kappa-B, MAP kinases and calcium signaling pathways. The protein is Immunoglobulin mu Fc receptor of Homo sapiens (Human).